A 193-amino-acid chain; its full sequence is MATASFNMQSVFAAPSGVLTTRNIRNTNQLFFKRIAPVGVRCMAQGDPIKEDPSVPSTSTSATPPQMPQSPPPPVSKPKVSTKFGDLLAFSGPAPERINGRLAMVGFVAAIAMELSKGENVFAQISDGGVGWFLGTTALLTLASMVPLFKGIRAEAKSKGFMTSDAELWNGRFAMLGLVALAFTEYVTGGTLV.

Residues 1–43 (MATASFNMQSVFAAPSGVLTTRNIRNTNQLFFKRIAPVGVRCM) constitute a chloroplast transit peptide. The disordered stretch occupies residues 46 to 80 (GDPIKEDPSVPSTSTSATPPQMPQSPPPPVSKPKV). Residues 54–64 (SVPSTSTSATP) are compositionally biased toward low complexity. The segment covering 65-76 (PQMPQSPPPPVS) has biased composition (pro residues). A run of 3 helical transmembrane segments spans residues 102–122 (LAMV…ENVF), 129–149 (GVGW…VPLF), and 173–193 (FAML…GTLV).

The protein belongs to the ELIP/psbS family.

It is found in the plastid. The protein localises to the chloroplast thylakoid membrane. Probably involved in the integration of pigments into the mature light-harvesting pigment-protein complexes. Light-harvesting chlorophyll (LHC) a/b-binding protein required to ensure a high rate of chlorophyll accumulation during deetiolation in continuous high light. Involved in seed germination. May fulfill a photoprotective functions. Prevents excess accumulation of free chlorophyll by inhibiting the entire chlorophyll biosynthesis pathway (e.g. 5-aminolevulinate synthesis and Mg-protoporphyrin IX chelatase activity), and hence prevent photooxidative stress. The protein is Early light-induced protein 2, chloroplastic of Arabidopsis thaliana (Mouse-ear cress).